The following is a 167-amino-acid chain: Ureidoglycolate lyase (167 aa).

This sequence belongs to the ureidoglycolate lyase family. In terms of assembly, homodimer. Ni(2+) serves as cofactor.

It carries out the reaction (S)-ureidoglycolate = urea + glyoxylate. The protein operates within nitrogen metabolism; (S)-allantoin degradation. Functionally, catalyzes the catabolism of the allantoin degradation intermediate (S)-ureidoglycolate, generating urea and glyoxylate. Involved in the utilization of allantoin as nitrogen source. The sequence is that of Ureidoglycolate lyase from Pseudomonas putida (strain W619).